We begin with the raw amino-acid sequence, 140 residues long: Nucleoside diphosphate kinase (140 aa).

K11, F59, R87, T93, R104, and N114 together coordinate ATP. The active-site Pros-phosphohistidine intermediate is the H117.

The protein belongs to the NDK family. Mg(2+) is required as a cofactor.

The protein localises to the cytoplasm. The catalysed reaction is a 2'-deoxyribonucleoside 5'-diphosphate + ATP = a 2'-deoxyribonucleoside 5'-triphosphate + ADP. It carries out the reaction a ribonucleoside 5'-diphosphate + ATP = a ribonucleoside 5'-triphosphate + ADP. Major role in the synthesis of nucleoside triphosphates other than ATP. The ATP gamma phosphate is transferred to the NDP beta phosphate via a ping-pong mechanism, using a phosphorylated active-site intermediate. The polypeptide is Nucleoside diphosphate kinase (Metallosphaera sedula (strain ATCC 51363 / DSM 5348 / JCM 9185 / NBRC 15509 / TH2)).